Reading from the N-terminus, the 946-residue chain is Bifunctional glutamine synthetase adenylyltransferase/adenylyl-removing enzyme (946 aa).

An adenylyl removase region spans residues Met1–Glu440. An adenylyl transferase region spans residues Ser449–Glu946.

The protein belongs to the GlnE family. Mg(2+) serves as cofactor.

The catalysed reaction is [glutamine synthetase]-O(4)-(5'-adenylyl)-L-tyrosine + phosphate = [glutamine synthetase]-L-tyrosine + ADP. The enzyme catalyses [glutamine synthetase]-L-tyrosine + ATP = [glutamine synthetase]-O(4)-(5'-adenylyl)-L-tyrosine + diphosphate. Functionally, involved in the regulation of glutamine synthetase GlnA, a key enzyme in the process to assimilate ammonia. When cellular nitrogen levels are high, the C-terminal adenylyl transferase (AT) inactivates GlnA by covalent transfer of an adenylyl group from ATP to specific tyrosine residue of GlnA, thus reducing its activity. Conversely, when nitrogen levels are low, the N-terminal adenylyl removase (AR) activates GlnA by removing the adenylyl group by phosphorolysis, increasing its activity. The regulatory region of GlnE binds the signal transduction protein PII (GlnB) which indicates the nitrogen status of the cell. The chain is Bifunctional glutamine synthetase adenylyltransferase/adenylyl-removing enzyme from Escherichia coli O45:K1 (strain S88 / ExPEC).